The primary structure comprises 76 residues: Conotoxin Am6.3 (76 aa).

The N-terminal stretch at 1 to 22 (MKLTCMMIIAVLFLTAWTFATA) is a signal peptide. Disulfide bonds link Cys52-Cys67, Cys59-Cys71, and Cys66-Cys75.

Belongs to the conotoxin O1 superfamily. Is not hydroxylated. As to expression, expressed by the venom duct.

It localises to the secreted. Probable toxin that inhibits ion channels. The sequence is that of Conotoxin Am6.3 from Conus amadis (Amadis cone).